We begin with the raw amino-acid sequence, 113 residues long: Large ribosomal subunit protein uL22 (113 aa).

Belongs to the universal ribosomal protein uL22 family. In terms of assembly, part of the 50S ribosomal subunit.

This protein binds specifically to 23S rRNA; its binding is stimulated by other ribosomal proteins, e.g. L4, L17, and L20. It is important during the early stages of 50S assembly. It makes multiple contacts with different domains of the 23S rRNA in the assembled 50S subunit and ribosome. In terms of biological role, the globular domain of the protein is located near the polypeptide exit tunnel on the outside of the subunit, while an extended beta-hairpin is found that lines the wall of the exit tunnel in the center of the 70S ribosome. This is Large ribosomal subunit protein uL22 from Syntrophomonas wolfei subsp. wolfei (strain DSM 2245B / Goettingen).